We begin with the raw amino-acid sequence, 276 residues long: NH(3)-dependent NAD(+) synthetase (276 aa).

43–50 (GISGGVDS) is a binding site for ATP. Asp49 is a binding site for Mg(2+). Position 146 (Arg146) interacts with deamido-NAD(+). Position 166 (Thr166) interacts with ATP. Glu171 is a Mg(2+) binding site. Lys179 and Asp186 together coordinate deamido-NAD(+). Positions 195 and 217 each coordinate ATP. Residue 266-267 (HK) coordinates deamido-NAD(+).

The protein belongs to the NAD synthetase family. As to quaternary structure, homodimer.

It carries out the reaction deamido-NAD(+) + NH4(+) + ATP = AMP + diphosphate + NAD(+) + H(+). Its pathway is cofactor biosynthesis; NAD(+) biosynthesis; NAD(+) from deamido-NAD(+) (ammonia route): step 1/1. Its function is as follows. Catalyzes the ATP-dependent amidation of deamido-NAD to form NAD. Uses ammonia as a nitrogen source. This Shewanella frigidimarina (strain NCIMB 400) protein is NH(3)-dependent NAD(+) synthetase.